A 106-amino-acid polypeptide reads, in one-letter code: 3-phenylpropionate/cinnamic acid dioxygenase ferredoxin subunit (106 aa).

A Rieske domain is found at 4–99; the sequence is IYACPVADVP…VHVEGGDIFI (96 aa). [2Fe-2S] cluster is bound by residues cysteine 42, histidine 44, cysteine 62, and histidine 65.

It belongs to the bacterial ring-hydroxylating dioxygenase ferredoxin component family. As to quaternary structure, this dioxygenase system consists of four proteins: the two subunits of the hydroxylase component (HcaE and HcaF), a ferredoxin (HcaC) and a ferredoxin reductase (HcaD). The cofactor is [2Fe-2S] cluster.

Its pathway is aromatic compound metabolism; 3-phenylpropanoate degradation. In terms of biological role, part of the multicomponent 3-phenylpropionate dioxygenase, that converts 3-phenylpropionic acid (PP) and cinnamic acid (CI) into 3-phenylpropionate-dihydrodiol (PP-dihydrodiol) and cinnamic acid-dihydrodiol (CI-dihydrodiol), respectively. This protein seems to be a 2Fe-2S ferredoxin. The protein is 3-phenylpropionate/cinnamic acid dioxygenase ferredoxin subunit of Escherichia coli O139:H28 (strain E24377A / ETEC).